Consider the following 136-residue polypeptide: ATP synthase epsilon chain (136 aa).

Belongs to the ATPase epsilon chain family. In terms of assembly, F-type ATPases have 2 components, CF(1) - the catalytic core - and CF(0) - the membrane proton channel. CF(1) has five subunits: alpha(3), beta(3), gamma(1), delta(1), epsilon(1). CF(0) has three main subunits: a, b and c.

The protein localises to the cell membrane. Its function is as follows. Produces ATP from ADP in the presence of a proton gradient across the membrane. The sequence is that of ATP synthase epsilon chain from Macrococcus caseolyticus (strain JCSC5402) (Macrococcoides caseolyticum).